The sequence spans 350 residues: Biotin synthase (350 aa).

Polar residues predominate over residues 1 to 13 (MVTQAATRPSNDA). The interval 1–20 (MVTQAATRPSNDAGQDGVTE) is disordered. Positions 71 to 296 (PEVEVEGIIS…RTMLRFAGGR (226 aa)) constitute a Radical SAM core domain. Residues Cys-86, Cys-90, and Cys-93 each coordinate [4Fe-4S] cluster. [2Fe-2S] cluster-binding residues include Cys-129, Cys-162, Cys-221, and Arg-291.

It belongs to the radical SAM superfamily. Biotin synthase family. Homodimer. The cofactor is [4Fe-4S] cluster. Requires [2Fe-2S] cluster as cofactor.

The catalysed reaction is (4R,5S)-dethiobiotin + (sulfur carrier)-SH + 2 reduced [2Fe-2S]-[ferredoxin] + 2 S-adenosyl-L-methionine = (sulfur carrier)-H + biotin + 2 5'-deoxyadenosine + 2 L-methionine + 2 oxidized [2Fe-2S]-[ferredoxin]. The protein operates within cofactor biosynthesis; biotin biosynthesis; biotin from 7,8-diaminononanoate: step 2/2. Its function is as follows. Catalyzes the conversion of dethiobiotin (DTB) to biotin by the insertion of a sulfur atom into dethiobiotin via a radical-based mechanism. The protein is Biotin synthase of Mycobacterium ulcerans (strain Agy99).